The sequence spans 620 residues: 1-deoxy-D-xylulose-5-phosphate synthase (620 aa).

Thiamine diphosphate contacts are provided by residues H80 and 121 to 123; that span reads GHS. Residue D152 coordinates Mg(2+). Thiamine diphosphate-binding positions include 153 to 154, N181, Y288, and E370; that span reads GA. A Mg(2+)-binding site is contributed by N181.

Belongs to the transketolase family. DXPS subfamily. Homodimer. Mg(2+) serves as cofactor. Thiamine diphosphate is required as a cofactor.

The enzyme catalyses D-glyceraldehyde 3-phosphate + pyruvate + H(+) = 1-deoxy-D-xylulose 5-phosphate + CO2. The protein operates within metabolic intermediate biosynthesis; 1-deoxy-D-xylulose 5-phosphate biosynthesis; 1-deoxy-D-xylulose 5-phosphate from D-glyceraldehyde 3-phosphate and pyruvate: step 1/1. Catalyzes the acyloin condensation reaction between C atoms 2 and 3 of pyruvate and glyceraldehyde 3-phosphate to yield 1-deoxy-D-xylulose-5-phosphate (DXP). The protein is 1-deoxy-D-xylulose-5-phosphate synthase of Escherichia coli O127:H6 (strain E2348/69 / EPEC).